Reading from the N-terminus, the 58-residue chain is Small ribosomal subunit protein bS21 (58 aa).

Basic and acidic residues predominate over residues 32 to 42; it reads IRKREHYEKPS. The segment at 32 to 58 is disordered; it reads IRKREHYEKPSVRRKKKSEAARKRKFN. The segment covering 43–58 has biased composition (basic residues); that stretch reads VRRKKKSEAARKRKFN.

Belongs to the bacterial ribosomal protein bS21 family.

In Lachnospira eligens (strain ATCC 27750 / DSM 3376 / VPI C15-48 / C15-B4) (Eubacterium eligens), this protein is Small ribosomal subunit protein bS21.